The sequence spans 242 residues: D-proline reductase subunit gamma (242 aa).

U152 functions as the Nucleophile in the catalytic mechanism. A non-standard amino acid (selenocysteine) is located at residue U152.

As to quaternary structure, consists of 3 subunits of 23, 26 and 45 kDa (alpha, gamma and beta respectively). The molecular weight of the complex is approximately 870 kDa, suggesting a decameric structure, if all 3 subunits are present in equal stoichiometry. In terms of processing, this subunit is carbonylated in vitro on an unidentified residue.

It is found in the cytoplasm. The catalysed reaction is [PrdC protein]-Se-L-selenocysteinyl-S-L-cysteine + 5-aminopentanoate = [PrdC protein]-L-selenocysteine/L-cysteine + D-proline. In terms of biological role, D-proline reductase catalyzes the reductive cleavage of a C-N bond in D-proline resulting in the formation of 5-aminovalerate. The alpha subunit has been shown to bind D-proline, presumably via the pyruvoyl group. The chain is D-proline reductase subunit gamma (prdB) from Acetoanaerobium sticklandii (strain ATCC 12662 / DSM 519 / JCM 1433 / CCUG 9281 / NCIMB 10654 / HF) (Clostridium sticklandii).